Consider the following 639-residue polypeptide: Phosphatidylinositol 3,4,5-trisphosphate 3-phosphatase cnrN (639 aa).

The Phosphatase tensin-type domain occupies 20 to 190 (FKSKEMDLDL…NYFKEIVSGS (171 aa)). Cysteine 129 serves as the catalytic Phosphocysteine intermediate. Positions 195-350 (EFVLTFRSIE…LQMECRFQNN (156 aa)) constitute a C2 tensin-type domain. Disordered regions lie at residues 243–265 (INNDNSESNNNNNNNNNNNNNNN), 395–429 (NNILASSAPTPLTTTTTTTTTTTTTSLPSSEHSTP), 451–498 (SSSG…SCSS), 519–567 (NNNN…RKRK), and 598–628 (FTKKINPNNNEENVDQKTLPILKKETNDPSE). Composition is skewed to low complexity over residues 244–265 (NNDNSESNNNNNNNNNNNNNNN), 395–424 (NNILASSAPTPLTTTTTTTTTTTTTSLPSS), 458–486 (NSSRNSNSNSRGGSSNSSSNRSSTSSRSS), and 519–554 (NNNNNNNNNNNNNNNNNNNNNKNSNNNNNESSSNSN). Positions 598–608 (FTKKINPNNNE) are enriched in polar residues. The span at 619-628 (LKKETNDPSE) shows a compositional bias: basic and acidic residues.

Requires Mg(2+) as cofactor.

It carries out the reaction a 1,2-diacyl-sn-glycero-3-phospho-(1D-myo-inositol-3,4,5-trisphosphate) + H2O = a 1,2-diacyl-sn-glycero-3-phospho-(1D-myo-inositol-4,5-bisphosphate) + phosphate. Functionally, protein phosphatase that negatively regulates PI3K-dependent pathways. Regulates cAMP signal transduction to control territory size. During development, a lawn of Dictyostelium cells breaks up into territories where cells aggregate in dendritic streams to form groups of 20'000 cells. The polypeptide is Phosphatidylinositol 3,4,5-trisphosphate 3-phosphatase cnrN (cnrN) (Dictyostelium discoideum (Social amoeba)).